The primary structure comprises 579 residues: Adenine deaminase (579 aa).

The protein belongs to the metallo-dependent hydrolases superfamily. Adenine deaminase family. Requires Mn(2+) as cofactor.

It carries out the reaction adenine + H2O + H(+) = hypoxanthine + NH4(+). The chain is Adenine deaminase from Listeria welshimeri serovar 6b (strain ATCC 35897 / DSM 20650 / CCUG 15529 / CIP 8149 / NCTC 11857 / SLCC 5334 / V8).